The primary structure comprises 1311 residues: MKGNRRQPAVASQPTSPASPTPSKGTSKYANRDGSKIISVPKPSLSVETPQPSPTVSASMPPPTAGKGQPPSTAPTAPSGSNASGGEAAPTVNRKKAKRRAKLAAKAAAEAGLSGDNLSNGVAAHSASSSLPKQPSDAGHSDNEGEALSRPSQTNGHTSTGASKSKKGRKSKNEDGRFMDSAGSATGSNHHAEMRRPPSPIPHASPGRASGISKEKIWNTSSQEERQRIKEFWLGLGEEERKSLVKVEKDAVLKKMKEQQKQTCSCTVCGRKRTAIEEELEGLYDAYYEELESFANQPNPNGDVPPMLGPTGHFGSTAYTSQIMPSKYPPRQPSRGRIVEHCGDDEDDDGEDEYSEEELDDDEDYSDDEEPEEMHRQRPTEYQTDFFNFGNSLTVQGTRFHESLNSLPPYAKSYMEQVLKYVFRRDVDHSLGGILTVADDLLKNDGKKFIEMMEQLAERRMQREEDAKEQFARNYHINGNNYPAHAHPPPPEDDEEYEDEEEEEEYDSQDEEYDEEEVQTNPVHCACHCPCRGGDYGDAGMSASADDGSYQDHGQESHAKQHRHLQDSMTEEQRMEEGRRMFQIFAARMFEQRVLTAYREKVAKERQEKLLEELAQEDRETEKRKAKKQKEAQKRRDKALQKKQAQAEEKARKDAEKAAEEAERLAEEQRRQEEQRQKNEERKKKKEAQRKAEEEERQRKEAERLRRAQEQKERQAEQDRKAREAKEKEKKAKEEAKQREKAARELKEREARERKEKADKERLEKEAKIKAEKEAREAQRKAERASQKATTLANVPVPTGPARRQSQAPNPAPALPQSQQASVASPQLPTAVPALPKLPTPQKPRRTSQQEPFTSGFAAQQVHGQGAGQYPAPPKAATPVHTSPGPGGLLSKGSSSQGQSLHSQATSPLGTSLPTSTSLPTPFGMPHPPPNQHYPPGIGPLNAPPGLGGPRLFNDYPEQMYQQSPFGFRQATQQHPQLPPGLGIPMGPGRGLGHGPPPPPGLSAQQSDFPNMPASIFGSIPKEPSPLSSHSRQASANFDSPIAATPIARPTPIGRPGSVVQGRRGSSDSPGRPGQPGQDNLEEISAPHLGSSALLDDLDEPLMDDFMQDTRSARRSIPGPPQSSRFPPPAVGSFPMSNSPFGPSLWSQPGPSLVNQGFGGSFGQPAPPPGFNSLSDALSVNSPWTFASRPPPRHNLPQMRKVLIQACLDLASTKTPLLDEKAEDPSRRYLPITAVKKCVDTKFASGSTFTVDDLMSMTNTEGNANNGGGSFDTQEFDGELCVRWVPDDIGDSRTVGRSVGEIGSPIVGSRG.

5 disordered regions span residues 1–226 (MKGN…QEER), 308–379 (LGPT…RQRP), 478–521 (NGNN…VQTN), 542–576 (SASA…QRME), and 613–1083 (ELAQ…NLEE). A compositionally biased stretch (low complexity) spans 8–27 (PAVASQPTSPASPTPSKGTS). The segment covering 46-58 (SVETPQPSPTVSA) has biased composition (polar residues). Residues 68-86 (GQPPSTAPTAPSGSNASGG) are compositionally biased toward low complexity. Over residues 93 to 103 (NRKKAKRRAKL) the composition is skewed to basic residues. Residues 116–133 (DNLSNGVAAHSASSSLPK) are compositionally biased toward polar residues. Positions 213 to 226 (SKEKIWNTSSQEER) are enriched in basic and acidic residues. Acidic residues-rich tracts occupy residues 343–372 (GDDE…EEPE) and 491–518 (PEDD…EEEV). Residues 450–521 (IEMMEQLAER…EYDEEEVQTN (72 aa)) are a coiled coil. Residues 599–795 (REKVAKERQE…SQKATTLANV (197 aa)) adopt a coiled-coil conformation. Composition is skewed to basic and acidic residues over residues 613 to 682 (ELAQ…NEER) and 689 to 786 (QRKA…ERAS). Low complexity-rich tracts occupy residues 805–829 (QSQA…PQLP) and 891–922 (SKGS…LPTP). Over residues 923–933 (FGMPHPPPNQH) the composition is skewed to pro residues. The segment covering 934–945 (YPPGIGPLNAPP) has biased composition (low complexity). Residues 960-975 (MYQQSPFGFRQATQQH) show a composition bias toward polar residues. Positions 984-994 (IPMGPGRGLGH) are enriched in gly residues. Positions 1026–1038 (PLSSHSRQASANF) are enriched in polar residues. Residues 1041–1052 (PIAATPIARPTP) show a composition bias toward low complexity.

This sequence belongs to the NST1 family.

It localises to the cytoplasm. Functionally, may act as a negative regulator of salt tolerance. This is Stress response protein NST1 (NST1) from Pyricularia oryzae (strain 70-15 / ATCC MYA-4617 / FGSC 8958) (Rice blast fungus).